We begin with the raw amino-acid sequence, 276 residues long: Aquaporin-1 (276 aa).

Over 1-10 (MLDAEQKKNY) the chain is Cytoplasmic. A helical membrane pass occupies residues 11 to 31 (VAGAFGEFVGTAYFLFMGVGG). Residues 32 to 46 (AVNFLNNAAGSPLPG) lie on the Extracellular side of the membrane. A helical membrane pass occupies residues 47-67 (FAIPFCFGFSLFVNVFIWAPI). Topologically, residues 68-93 (SGGVFNPSITIALMATNPKDFPWYRG) are cytoplasmic. The short motif at 73–75 (NPS) is the NPA 1 element. Residues 94–114 (ILYIVSQFLGALFGSWLIDLI) form a helical membrane-spanning segment. Over 115 to 133 (QPEAPNAATLLADGVSVAQ) the chain is Extracellular. A helical transmembrane segment spans residues 134 to 154 (GLFMEMFATSVLTMAVLILAG). Topologically, residues 155-159 (ERYGK) are cytoplasmic. A helical membrane pass occupies residues 160–180 (YLAPFGIGMSLFISALCAGPY). The Extracellular segment spans residues 181–204 (TGASLNPARTLGPAIVANQYGRAH). The short motif at 186-188 (NPA) is the NPA 2 element. Residues 205 to 225 (WIYYVGPTLGSLLAAGYWHIL) traverse the membrane as a helical segment. Residues 226-276 (RILNIDVVDLKNVLNKCKKCGKEDPRISLKHCEECLKDDPKPEKYDIESQN) are Cytoplasmic-facing.

It belongs to the MIP/aquaporin (TC 1.A.8) family.

It localises to the cell membrane. It catalyses the reaction H2O(in) = H2O(out). Its activity is regulated as follows. Polyethylene glycol (PEG) stimulates whereas glycerol inhibits the aquaporin activity. Water channel required to facilitate the transport of water across membranes. Stimulates plant drought tolerance by facilitating the transport of water from the arbuscular mycorrhiza fungus to host plants. The chain is Aquaporin-1 from Rhizophagus irregularis (Arbuscular mycorrhizal fungus).